The sequence spans 505 residues: Probable alpha-L-arabinofuranosidase C (505 aa).

3 N-linked (GlcNAc...) asparagine glycosylation sites follow: asparagine 152, asparagine 181, and asparagine 269.

The protein belongs to the glycosyl hydrolase 51 family.

It localises to the secreted. The catalysed reaction is Hydrolysis of terminal non-reducing alpha-L-arabinofuranoside residues in alpha-L-arabinosides.. Its pathway is glycan metabolism; L-arabinan degradation. Its function is as follows. Alpha-L-arabinofuranosidase involved in the degradation of arabinoxylan, a major component of plant hemicellulose. Acts only on small linear 1,5-alpha-linked L-arabinofuranosyl oligosaccharides. This is Probable alpha-L-arabinofuranosidase C (abfC) from Aspergillus niger (strain ATCC MYA-4892 / CBS 513.88 / FGSC A1513).